A 103-amino-acid polypeptide reads, in one-letter code: uncharacterized protein (103 aa).

A helical membrane pass occupies residues 37–57 (FILLSSLLIGGLLITIACYHI).

It is found in the membrane. This is an uncharacterized protein from Saccharomyces cerevisiae (strain ATCC 204508 / S288c) (Baker's yeast).